The primary structure comprises 822 residues: SKI/DACH domain-containing protein 1 (822 aa).

Residues 245–261 (HHHHHHHHHHHHHHHRA) show a composition bias toward basic residues. Residues 245–370 (HHHHHHHHHH…SSSGSSQVSV (126 aa)) form a disordered region. The span at 278-318 (PHLGSFPESCSSDSESSSYSDHAANDSDFGSSLSSSSNSVS) shows a compositional bias: low complexity. The segment covering 319 to 338 (SEEEEEEGEEEEEEEEEEEG) has biased composition (acidic residues). Residue Lys-602 forms a Glycyl lysine isopeptide (Lys-Gly) (interchain with G-Cter in SUMO2) linkage. Disordered regions lie at residues 658–677 (ETPS…TLGS) and 706–732 (LQTP…THEG). A compositionally biased stretch (polar residues) spans 660 to 675 (PSLNPLAQSQGLSCTL).

The protein belongs to the DACH/dachshund family.

This Mus musculus (Mouse) protein is SKI/DACH domain-containing protein 1 (Skida1).